Reading from the N-terminus, the 366-residue chain is MSLINRKLEHVEICLYEDVQGIVSTLLEDVTLIHQAMPRMNFRDVDTRAEFLGKTLSLPLMVTGMTGGHEELGKVNAVIAEVVEELGLAMGVGSQRVAVERPETAESFKVTRRMAPTAPLVANLGLPQVTRGYGVKQFMDAIQMIEANAIAVHLNPAQELFQPEGEPEYPLSALEALRDISKELNVPVIVKESGTGMSMETAKLLADHGFKILDVSGQGGTSWIAVEMVRNRRKGNWKYESSQLFSGWGIPTAASIVETRYSVPDSYIIASGGIRNGLDVAKSISLGANIAGMANPVLHHAVRGKEQLKKFFEEVAFQLRAAMFLTGSRDVKTLRHAPLVISGKLKDWLESRGLTLSVYESIRKGA.

Residue 6 to 7 (RK) coordinates substrate. FMN-binding positions include Thr63, 64 to 66 (GMT), Ser94, and Asn123. A substrate-binding site is contributed by 94-96 (SQR). Gln158 contacts substrate. Glu159 lines the Mg(2+) pocket. Residues Lys191, Ser216, Thr221, 273–275 (GIR), and 294–295 (AN) contribute to the FMN site.

It belongs to the IPP isomerase type 2 family. As to quaternary structure, homooctamer. Dimer of tetramers. FMN serves as cofactor. Requires NADPH as cofactor. The cofactor is Mg(2+).

It is found in the cytoplasm. It carries out the reaction isopentenyl diphosphate = dimethylallyl diphosphate. Its function is as follows. Involved in the biosynthesis of isoprenoids. Catalyzes the 1,3-allylic rearrangement of the homoallylic substrate isopentenyl (IPP) to its allylic isomer, dimethylallyl diphosphate (DMAPP). In Metallosphaera sedula (strain ATCC 51363 / DSM 5348 / JCM 9185 / NBRC 15509 / TH2), this protein is Isopentenyl-diphosphate delta-isomerase.